Consider the following 855-residue polypeptide: DNA mismatch repair protein MutS (855 aa).

615–622 provides a ligand contact to ATP; it reads GPNMGGKS.

This sequence belongs to the DNA mismatch repair MutS family.

In terms of biological role, this protein is involved in the repair of mismatches in DNA. It is possible that it carries out the mismatch recognition step. This protein has a weak ATPase activity. The protein is DNA mismatch repair protein MutS of Aliivibrio salmonicida (strain LFI1238) (Vibrio salmonicida (strain LFI1238)).